A 260-amino-acid chain; its full sequence is uncharacterized protein (260 aa).

Residues 7–67 (VPALTRAIDI…DHQENFCLWT (61 aa)) form the HTH iclR-type domain. The H-T-H motif DNA-binding region spans 28 to 47 (AATIIDTLGIPKSTAYLLLN). Positions 82–251 (LRELARPRLT…ARDISRLLGW (170 aa)) constitute an IclR-ED domain.

This is an uncharacterized protein from Escherichia coli (strain K12).